We begin with the raw amino-acid sequence, 473 residues long: Photosystem II CP43 reaction center protein (473 aa).

The propeptide occupies 1 to 14; it reads MKTLYSLRRFYHVE. T15 bears the N-acetylthreonine mark. A Phosphothreonine modification is found at T15. A run of 5 helical transmembrane segments spans residues 69 to 93, 134 to 155, 178 to 200, 255 to 275, and 291 to 312; these read LFEVAHFVPEKPMYEQGLILLPHLA, LLGPETLEESFPFFGYVWKDRN, KALYFGGVYDTWAPGGGDVRKIT, KPFAWARRAFVWSGEAYLSYS, and WFNNTAYPSEFYGPTGPEASQA. E367 is a binding site for [CaMn4O5] cluster. Residues 447-471 traverse the membrane as a helical segment; sequence RARAAAAGFEKGIDRDFEPVLSMTP.

This sequence belongs to the PsbB/PsbC family. PsbC subfamily. As to quaternary structure, PSII is composed of 1 copy each of membrane proteins PsbA, PsbB, PsbC, PsbD, PsbE, PsbF, PsbH, PsbI, PsbJ, PsbK, PsbL, PsbM, PsbT, PsbX, PsbY, PsbZ, Psb30/Ycf12, at least 3 peripheral proteins of the oxygen-evolving complex and a large number of cofactors. It forms dimeric complexes. It depends on Binds multiple chlorophylls and provides some of the ligands for the Ca-4Mn-5O cluster of the oxygen-evolving complex. It may also provide a ligand for a Cl- that is required for oxygen evolution. PSII binds additional chlorophylls, carotenoids and specific lipids. as a cofactor.

Its subcellular location is the plastid. It is found in the chloroplast thylakoid membrane. Its function is as follows. One of the components of the core complex of photosystem II (PSII). It binds chlorophyll and helps catalyze the primary light-induced photochemical processes of PSII. PSII is a light-driven water:plastoquinone oxidoreductase, using light energy to abstract electrons from H(2)O, generating O(2) and a proton gradient subsequently used for ATP formation. The sequence is that of Photosystem II CP43 reaction center protein from Chloranthus spicatus (Chulantree).